The following is a 528-amino-acid chain: Tyrosine--tRNA ligase, cytoplasmic (528 aa).

Met1 is subject to N-acetylmethionine. Residue Gly2 is modified to N-acetylglycine; in Tyrosine--tRNA ligase, cytoplasmic, N-terminally processed. Residue Tyr39 coordinates L-tyrosine. Tyr39 provides a ligand contact to trans-resveratrol. Positions 44 to 52 (TTGKPHVAY) match the 'HIGH' region motif. The L-tyrosine site is built by Tyr166, Gln170, Asp173, and Gln188. The trans-resveratrol site is built by Gln170 and Asp173. Residue Lys197 is modified to N6-acetyllysine. Position 205 is a phosphoserine (Ser205). Residue Lys206 is modified to N6-acetyllysine. The 'KMSKS' region motif lies at 222 to 226 (KMSSS). The short motif at 242–247 (KKKLKK) is the Nuclear localization signal element. Residues 339–363 (AAYPDPSKQKPTAKGPAKSSEPEEI) are disordered. In terms of domain architecture, tRNA-binding spans 364–468 (IPSRLDIRVG…AGSAPGERVF (105 aa)). Phosphoserine is present on Ser386. N6-acetyllysine occurs at positions 474, 482, and 490.

Belongs to the class-I aminoacyl-tRNA synthetase family. As to quaternary structure, homodimer. Interacts (when binding to resveratrol) with PARP1; interaction stimulates the poly-ADP-ribosyltransferase activity of PARP1.

It is found in the cytoplasm. Its subcellular location is the nucleus. The enzyme catalyses tRNA(Tyr) + L-tyrosine + ATP = L-tyrosyl-tRNA(Tyr) + AMP + diphosphate + H(+). With respect to regulation, resveratrol strongly inhibits the tyrosine--tRNA ligase activity. Functionally, tyrosine--tRNA ligase that catalyzes the attachment of tyrosine to tRNA(Tyr) in a two-step reaction: tyrosine is first activated by ATP to form Tyr-AMP and then transferred to the acceptor end of tRNA(Tyr). Also acts as a positive regulator of poly-ADP-ribosylation in the nucleus, independently of its tyrosine--tRNA ligase activity. Activity is switched upon resveratrol-binding: resveratrol strongly inhibits the tyrosine--tRNA ligase activity and promotes relocalization to the nucleus, where YARS1 specifically stimulates the poly-ADP-ribosyltransferase activity of PARP1. This is Tyrosine--tRNA ligase, cytoplasmic (Yars1) from Rattus norvegicus (Rat).